Reading from the N-terminus, the 366-residue chain is Galactoside alpha-(1,2)-fucosyltransferase 1 (366 aa).

The Cytoplasmic portion of the chain corresponds to 1-8; sequence MWPLSHRH. Residues 9–25 traverse the membrane as a helical; Signal-anchor for type II membrane protein segment; the sequence is LCLAFLLVCVLSAISFF. At 26 to 366 the chain is on the lumenal side; it reads LHVHQDSFRH…LSPLWTLAEP (341 aa). N66, N302, and N328 each carry an N-linked (GlcNAc...) asparagine glycan.

It belongs to the glycosyltransferase 11 family.

The protein resides in the golgi apparatus. Its subcellular location is the golgi stack membrane. The catalysed reaction is a beta-D-galactosyl-(1-&gt;4)-N-acetyl-beta-D-glucosaminyl derivative + GDP-beta-L-fucose = an alpha-L-Fuc-(1-&gt;2)-beta-D-Gal-(1-&gt;4)-beta-D-GlcNAc derivative + GDP + H(+). The enzyme catalyses a ganglioside GA1 + GDP-beta-L-fucose = a ganglioside Fuc-GA1 + GDP + H(+). It carries out the reaction a beta-D-Gal-(1-&gt;3)-beta-D-GlcNAc-(1-&gt;3)-beta-D-Gal-(1-&gt;4)-beta-D-Glc-(1&lt;-&gt;1')-Cer(d18:1(4E)) + GDP-beta-L-fucose = alpha-L-fucosyl-(1-&gt;2)- beta-D-galactosyl-(1-&gt;3)-N-acetyl-beta-D-glucosaminyl-(1-&gt;3)-beta-D-galactosyl-(1-&gt;4)-beta-D-glucosyl-(1&lt;-&gt;1')-N-acylsphing-4-enine + GDP + H(+). It catalyses the reaction a neolactoside nLc4Cer(d18:1(4E)) + GDP-beta-L-fucose = a neolactoside IV(2)-alpha-Fuc-nLc4Cer(d18:1(4E)) + GDP + H(+). The catalysed reaction is a ganglioside GM1 + GDP-beta-L-fucose = a ganglioside Fuc-GM1 + GDP + H(+). The enzyme catalyses beta-D-galactosyl-(1-&gt;3)-N-acetyl-D-galactosamine + GDP-beta-L-fucose = alpha-L-fucosyl-(1-&gt;2)-beta-D-galactosyl-(1-&gt;3)-N-acetyl-D-galactosamine + GDP + H(+). It functions in the pathway protein modification; protein glycosylation. Catalyzes the transfer of L-fucose, from a guanosine diphosphate-beta-L-fucose, to the terminal galactose residue of glycoconjugates through an alpha(1,2) linkage leading to H antigen synthesis that is an intermediate substrate in the synthesis of ABO blood group antigens. H antigen is essential for maturation of the glomerular layer of the main olfactory bulb, in cell migration and early cell-cell contacts during tumor associated angiogenesis. Preferentially fucosylates soluble lactose and to a lesser extent fucosylates glycolipids gangliosides GA1 and GM1a. The chain is Galactoside alpha-(1,2)-fucosyltransferase 1 from Alouatta belzebul (Red-handed howler monkey).